The following is a 156-amino-acid chain: Ribosomal RNA large subunit methyltransferase H (156 aa).

Residues Leu-73, Gly-104, and 123-128 (LSSLTL) contribute to the S-adenosyl-L-methionine site.

The protein belongs to the RNA methyltransferase RlmH family. In terms of assembly, homodimer.

It is found in the cytoplasm. It catalyses the reaction pseudouridine(1915) in 23S rRNA + S-adenosyl-L-methionine = N(3)-methylpseudouridine(1915) in 23S rRNA + S-adenosyl-L-homocysteine + H(+). Specifically methylates the pseudouridine at position 1915 (m3Psi1915) in 23S rRNA. The sequence is that of Ribosomal RNA large subunit methyltransferase H from Bordetella petrii (strain ATCC BAA-461 / DSM 12804 / CCUG 43448).